A 430-amino-acid polypeptide reads, in one-letter code: Serine--tRNA ligase (430 aa).

237–239 (TAE) contributes to the L-serine binding site. Position 268-270 (268-270 (RSE)) interacts with ATP. E291 contributes to the L-serine binding site. ATP is bound at residue 355–358 (EISS). S391 contributes to the L-serine binding site.

Belongs to the class-II aminoacyl-tRNA synthetase family. Type-1 seryl-tRNA synthetase subfamily. Homodimer. The tRNA molecule binds across the dimer.

The protein localises to the cytoplasm. It catalyses the reaction tRNA(Ser) + L-serine + ATP = L-seryl-tRNA(Ser) + AMP + diphosphate + H(+). It carries out the reaction tRNA(Sec) + L-serine + ATP = L-seryl-tRNA(Sec) + AMP + diphosphate + H(+). It participates in aminoacyl-tRNA biosynthesis; selenocysteinyl-tRNA(Sec) biosynthesis; L-seryl-tRNA(Sec) from L-serine and tRNA(Sec): step 1/1. In terms of biological role, catalyzes the attachment of serine to tRNA(Ser). Is also able to aminoacylate tRNA(Sec) with serine, to form the misacylated tRNA L-seryl-tRNA(Sec), which will be further converted into selenocysteinyl-tRNA(Sec). The sequence is that of Serine--tRNA ligase from Salmonella enteritidis PT4 (strain P125109).